The primary structure comprises 432 residues: Adenylosuccinate synthetase (432 aa).

GTP contacts are provided by residues glycine 13 to lysine 19 and glycine 41 to threonine 43. Aspartate 14 functions as the Proton acceptor in the catalytic mechanism. Aspartate 14 and glycine 41 together coordinate Mg(2+). IMP contacts are provided by residues aspartate 14–lysine 17, asparagine 39–histidine 42, threonine 130, arginine 144, glutamine 225, threonine 240, and arginine 304. Catalysis depends on histidine 42, which acts as the Proton donor. Alanine 300–arginine 306 is a binding site for substrate. GTP is bound by residues arginine 306, lysine 332–aspartate 334, and serine 415–glycine 417.

It belongs to the adenylosuccinate synthetase family. As to quaternary structure, homodimer. The cofactor is Mg(2+).

The protein resides in the cytoplasm. The catalysed reaction is IMP + L-aspartate + GTP = N(6)-(1,2-dicarboxyethyl)-AMP + GDP + phosphate + 2 H(+). Its pathway is purine metabolism; AMP biosynthesis via de novo pathway; AMP from IMP: step 1/2. In terms of biological role, plays an important role in the de novo pathway of purine nucleotide biosynthesis. Catalyzes the first committed step in the biosynthesis of AMP from IMP. The protein is Adenylosuccinate synthetase of Yersinia pestis bv. Antiqua (strain Antiqua).